The chain runs to 525 residues: Retinoblastoma-binding-like protein E (525 aa).

5 WD repeats span residues 25-66, 69-108, 222-261, 267-312, and 313-352; these read PKNI…IVRT, HHTGCVNSISWSRNGKKLLTASNDGSLVLWDLATSKILYS, SSNTTVKQIEFSRNHRFMLVSSSDKVLRLISLESTNLYQQ, DSVN…KDLE, and GPKEGLVDVVWHPLRPIIVSISFTGVIYVWTAYFEENWSS. Disordered regions lie at residues 371 to 398 and 462 to 525; these read DEFDAKDSDNENQEVNNNNNNNIGRNPY and EKYQ…KKRK. The span at 383–392 shows a compositional bias: low complexity; the sequence is QEVNNNNNNN. Basic and acidic residues predominate over residues 462 to 471; it reads EKYQKDKEDS. Positions 472 to 500 are enriched in low complexity; that stretch reads SSTTSNSTISSSSSPSPSSSSTTTTTTTS. A compositionally biased stretch (basic and acidic residues) spans 501–525; it reads QKKDETQKKEKSTKKERNSDSKKRK.

The protein resides in the nucleus. Its function is as follows. Involved in mono-, di- and trimethylation at 'Lys-4' of histone H3. Histone H3 'Lys-4' methylation represents a specific tag for epigenetic transcriptional activation. The sequence is that of Retinoblastoma-binding-like protein E from Dictyostelium discoideum (Social amoeba).